A 282-amino-acid chain; its full sequence is Bifunctional protein FolD 1 (282 aa).

Residues 167 to 169 (GRS) and Ser-192 contribute to the NADP(+) site.

The protein belongs to the tetrahydrofolate dehydrogenase/cyclohydrolase family. In terms of assembly, homodimer.

The enzyme catalyses (6R)-5,10-methylene-5,6,7,8-tetrahydrofolate + NADP(+) = (6R)-5,10-methenyltetrahydrofolate + NADPH. It catalyses the reaction (6R)-5,10-methenyltetrahydrofolate + H2O = (6R)-10-formyltetrahydrofolate + H(+). It functions in the pathway one-carbon metabolism; tetrahydrofolate interconversion. Its function is as follows. Catalyzes the oxidation of 5,10-methylenetetrahydrofolate to 5,10-methenyltetrahydrofolate and then the hydrolysis of 5,10-methenyltetrahydrofolate to 10-formyltetrahydrofolate. This is Bifunctional protein FolD 1 from Colwellia psychrerythraea (strain 34H / ATCC BAA-681) (Vibrio psychroerythus).